An 846-amino-acid chain; its full sequence is Auxin response factor 2A (846 aa).

Residues 1–12 (MAASEVSIQGYS) show a composition bias toward polar residues. A disordered region spans residues 1 to 30 (MAASEVSIQGYSEPSDGSRPVSETGRSSSG). A DNA-binding region (TF-B3) is located at residues 146–248 (FCKTLTASDT…ELRVGVRRAM (103 aa)). 2 disordered regions span residues 380-423 (PPAL…HSQA) and 660-693 (DMNI…GVAA). Composition is skewed to polar residues over residues 398-408 (ILPTSPDSSVL) and 414-423 (SRATADHSQA). Positions 675–693 (SDQRSEQSKGSKVDDGVAA) are enriched in basic and acidic residues. The PB1 domain occupies 720 to 804 (RSCTKVHKQG…RKIFIYTKEE (85 aa)). Composition is skewed to polar residues over residues 809–824 (NPGT…SSVA) and 836–846 (QLPSESGQAES). The segment at 809-846 (NPGTLNSKGEDTSSVAEGSDAKEVKNLQLPSESGQAES) is disordered.

This sequence belongs to the ARF family. Homodimers and heterodimers. Interacts with ASR1. Expressed in root, leaf and flower. Expressed in flower buds about three days before opening including ovary, petal and sepal with the highest in stamen. Expressed in stem. Expressed in fruit. Expressed in seeds.

The protein resides in the nucleus. In terms of biological role, auxin response factors (ARFs) are transcriptional factors that bind specifically to the DNA sequence 5'-TGTCTC-3' found in the auxin-responsive promoter elements (AuxREs). Could act as transcriptional activator or repressor. Involved in the control of fruit ripening process. Regulates expression of a number of ripening regulators, transcription factors, and ethylene biosynthesis and signaling components. May act as a transcriptional repressor of auxin-responsive genes. Regulates vegetative growth, lateral root formation and flower organ senescence, possibly partially by regulating gene expression of auxin and ethylene response factor (ERF) genes. Plays a negative role in axillary shoot meristem formation. This chain is Auxin response factor 2A, found in Solanum lycopersicum (Tomato).